Reading from the N-terminus, the 265-residue chain is Chanoclavine-I dehydrogenase easD (265 aa).

The N-terminal stretch at 1–20 is a signal peptide; it reads MSFVSSKIFAITGGASGIGA. NADP(+) contacts are provided by isoleucine 18, aspartate 66, arginine 132, tyrosine 169, lysine 173, and threonine 205. Tyrosine 169 (proton donor) is an active-site residue. Catalysis depends on lysine 173, which acts as the Lowers pKa of active site Tyr.

This sequence belongs to the short-chain dehydrogenases/reductases (SDR) family. As to quaternary structure, homotetramer.

It catalyses the reaction chanoclavine-I + NAD(+) = chanoclavine-I aldehyde + NADH + H(+). The protein operates within alkaloid biosynthesis; ergot alkaloid biosynthesis. Its function is as follows. Chanoclavine-I dehydrogenase; part of the gene cluster that mediates the biosynthesis of fungal ergot alkaloid. DmaW catalyzes the first step of ergot alkaloid biosynthesis by condensing dimethylallyl diphosphate (DMAP) and tryptophan to form 4-dimethylallyl-L-tryptophan. The second step is catalyzed by the methyltransferase easF that methylates 4-dimethylallyl-L-tryptophan in the presence of S-adenosyl-L-methionine, resulting in the formation of 4-dimethylallyl-L-abrine. The catalase easC and the FAD-dependent oxidoreductase easE then transform 4-dimethylallyl-L-abrine to chanoclavine-I which is further oxidized by easD in the presence of NAD(+), resulting in the formation of chanoclavine-I aldehyde. Chanoclavine-I aldehyde is the precursor of ergoamides and ergopeptines in Clavicipitaceae, and clavine-type alcaloids such as fumiclavine in Trichocomaceae. However, the metabolites downstream of chanoclavine-I aldehyde in Arthrodermataceae have not been identified yet. This chain is Chanoclavine-I dehydrogenase easD, found in Trichophyton verrucosum (strain HKI 0517).